A 2205-amino-acid polypeptide reads, in one-letter code: Genome polyprotein (2205 aa).

Residue G2 is the site of N-myristoyl glycine; by host attachment. Over 2 to 1518 (GAQVSSQKVG…NINRAMTILQ (1517 aa)) the chain is Cytoplasmic. An amphipathic alpha-helix region spans residues 579–599 (GLGDLIEGVVEGVTRNALTPL). Residues 598 to 613 (PLTPVNNLPDTRSSGP) are compositionally biased toward polar residues. The tract at residues 598–619 (PLTPVNNLPDTRSSGPAHSKET) is disordered. Active-site for protease 2A activity residues include H899 and D917. C934 and C936 together coordinate Zn(2+). Catalysis depends on C988, which acts as the For protease 2A activity. Zn(2+) contacts are provided by C994 and H996. Positions 1126–1198 (GDSWLKKFTE…HQSCPSQEHQ (73 aa)) are membrane-binding. The interval 1126-1264 (GDSWLKKFTE…SPGTGKSVAT (139 aa)) is oligomerization. The segment at 1147–1151 (SNKIS) is RNA-binding. Positions 1230–1386 (EHTINNYVQF…SEYSRDGKLN (157 aa)) constitute an SF3 helicase domain. 1254–1261 (GSPGTGKS) is a binding site for ATP. Residues C1394, C1397, C1406, and C1411 each coordinate Zn(2+). The segment at 1394–1411 (CKNCHQPANFKRCCPLVC) adopts a C4-type zinc-finger fold. An RNA-binding region spans residues 1438–1445 (ERNRRSSI). Residues 1449-1454 (MEALFQ) are oligomerization. The stretch at 1519 to 1534 (AVTTFAAVAGVVYVMY) is an intramembrane region. The Cytoplasmic portion of the chain corresponds to 1535–2205 (KLFAGHQGAY…TLYRRWLDSF (671 aa)). Y1544 bears the O-(5'-phospho-RNA)-tyrosine mark. In terms of domain architecture, Peptidase C3 spans 1564-1742 (GPGFDYAVAM…FAAALKRSYF (179 aa)). Active-site for protease 3C activity residues include H1603, E1634, and C1710. A RdRp catalytic domain is found at 1971–2086 (MEEKLFDYTG…SYPHEVDASL (116 aa)). Mg(2+)-binding residues include D1977 and D2072.

It belongs to the picornaviruses polyprotein family. As to quaternary structure, interacts with capsid protein VP1 and capsid protein VP3 to form heterotrimeric protomers. Interacts with capsid protein VP0, and capsid protein VP3 to form heterotrimeric protomers. Interacts with human PVR. Five protomers subsequently associate to form pentamers which serve as building blocks for the capsid. Interacts with capsid protein VP2, capsid protein VP3 and capsid protein VP4 following cleavage of capsid protein VP0. In terms of assembly, interacts with capsid protein VP1 and capsid protein VP3 in the mature capsid. As to quaternary structure, interacts with capsid protein VP0 and capsid protein VP1 to form heterotrimeric protomers. Five protomers subsequently associate to form pentamers which serve as building blocks for the capsid. Interacts with capsid protein VP4 in the mature capsid. Interacts with protein 2C; this interaction may be important for virion morphogenesis. Interacts with capsid protein VP1 and capsid protein VP3. In terms of assembly, homodimer. As to quaternary structure, homohexamer; forms a hexameric ring structure with 6-fold symmetry characteristic of AAA+ ATPases. Interacts (via N-terminus) with host RTN3 (via reticulon domain); this interaction is important for viral replication. Interacts with capsid protein VP3; this interaction may be important for virion morphogenesis. Interacts with protein 3CD. In terms of assembly, homodimer. Interacts with host GBF1. Interacts (via GOLD domain) with host ACBD3 (via GOLD domain); this interaction allows the formation of a viral protein 3A/ACBD3 heterotetramer with a 2:2 stoichiometry, which will stimulate the recruitment of host PI4KB in order to synthesize PI4P at the viral RNA replication sites. As to quaternary structure, interacts with RNA-directed RNA polymerase. Interacts with protein 3AB and with RNA-directed RNA polymerase. In terms of assembly, interacts with Viral protein genome-linked and with protein 3CD. The cofactor is Mg(2+). Specific enzymatic cleavages in vivo by the viral proteases yield processing intermediates and the mature proteins. In terms of processing, myristoylation is required for the formation of pentamers during virus assembly. Further assembly of 12 pentamers and a molecule of genomic RNA generates the provirion. Post-translationally, during virion maturation, immature virions are rendered infectious following cleavage of VP0 into VP4 and VP2. This maturation seems to be an autocatalytic event triggered by the presence of RNA in the capsid and it is followed by a conformational change infectious virion. Myristoylation is required during RNA encapsidation and formation of the mature virus particle. In terms of processing, VPg is uridylylated by the polymerase into VPg-pUpU. This acts as a nucleotide-peptide primer for the genomic RNA replication.

The protein resides in the virion. It localises to the host cytoplasm. The protein localises to the host cytoplasmic vesicle membrane. Its subcellular location is the host nucleus. It catalyses the reaction a ribonucleoside 5'-triphosphate + H2O = a ribonucleoside 5'-diphosphate + phosphate + H(+). The enzyme catalyses Selective cleavage of Tyr-|-Gly bond in the picornavirus polyprotein.. The catalysed reaction is RNA(n) + a ribonucleoside 5'-triphosphate = RNA(n+1) + diphosphate. It carries out the reaction Selective cleavage of Gln-|-Gly bond in the poliovirus polyprotein. In other picornavirus reactions Glu may be substituted for Gln, and Ser or Thr for Gly.. Its activity is regulated as follows. Replication or transcription is subject to high level of random mutations by the nucleotide analog ribavirin. In terms of biological role, forms an icosahedral capsid of pseudo T=3 symmetry with capsid proteins VP2 and VP3. The capsid is 300 Angstroms in diameter, composed of 60 copies of each capsid protein and enclosing the viral positive strand RNA genome. Capsid protein VP1 mainly forms the vertices of the capsid. Capsid protein VP1 interacts with host cell receptor PVR to provide virion attachment to target host cells. This attachment induces virion internalization predominantly through clathrin- and caveolin-independent endocytosis in Hela cells and through caveolin-mediated endocytosis in brain microvascular endothelial cells. Tyrosine kinases are probably involved in the entry process. Virus binding to PVR induces increased junctional permeability and rearrangement of junctional proteins. Modulation of endothelial tight junctions, as well as cytolytic infection of endothelial cells themselves, may result in loss of endothelial integrity which may help the virus to reach the CNS. After binding to its receptor, the capsid undergoes conformational changes. Capsid protein VP1 N-terminus (that contains an amphipathic alpha-helix) and capsid protein VP4 are externalized. Together, they shape a pore in the host membrane through which viral genome is translocated to host cell cytoplasm. Forms an icosahedral capsid of pseudo T=3 symmetry with capsid proteins VP2 and VP3. The capsid is 300 Angstroms in diameter, composed of 60 copies of each capsid protein and enclosing the viral positive strand RNA genome. Its function is as follows. Lies on the inner surface of the capsid shell. After binding to the host receptor, the capsid undergoes conformational changes. Capsid protein VP4 is released, Capsid protein VP1 N-terminus is externalized, and together, they shape a pore in the host membrane through which the viral genome is translocated into the host cell cytoplasm. Functionally, component of immature procapsids, which is cleaved into capsid proteins VP4 and VP2 after maturation. Allows the capsid to remain inactive before the maturation step. In terms of biological role, cysteine protease that cleaves viral polyprotein and specific host proteins. It is responsible for the autocatalytic cleavage between the P1 and P2 regions, which is the first cleavage occurring in the polyprotein. Also cleaves the host translation initiation factor EIF4G1, in order to shut down the capped cellular mRNA translation. Inhibits the host nucleus-cytoplasm protein and RNA trafficking by cleaving host members of the nuclear pores including NUP98, NUP62 and NUP153. Counteracts stress granule formation probably by antagonizing its assembly or promoting its dissassembly. Cleaves and inhibits host IFIH1/MDA5, thereby inhibiting the type-I IFN production and the establishment of the antiviral state. Cleaves and inhibits host MAVS, thereby inhibiting the type-I IFN production and the establishment of the antiviral state. Plays an essential role in the virus replication cycle by acting as a viroporin. Creates a pore in the host endoplasmic reticulum and as a consequence releases Ca2+ in the cytoplasm of infected cell. In turn, high levels of cytoplasmic calcium may trigger membrane trafficking and transport of viral ER-associated proteins to viroplasms, sites of viral genome replication. Its function is as follows. Induces and associates with structural rearrangements of intracellular membranes. Displays RNA-binding, nucleotide binding and NTPase activities. May play a role in virion morphogenesis and viral RNA encapsidation by interacting with the capsid protein VP3. Functionally, localizes the viral replication complex to the surface of membranous vesicles. Together with protein 3CD binds the Cis-Active RNA Element (CRE) which is involved in RNA synthesis initiation. Acts as a cofactor to stimulate the activity of 3D polymerase, maybe through a nucleid acid chaperone activity. In terms of biological role, localizes the viral replication complex to the surface of membranous vesicles. It inhibits host cell endoplasmic reticulum-to-Golgi apparatus transport and causes the disassembly of the Golgi complex, possibly through GBF1 interaction. This would result in depletion of MHC, trail receptors and IFN receptors at the host cell surface. Plays an essential role in viral RNA replication by recruiting ACBD3 and PI4KB at the viral replication sites, thereby allowing the formation of the rearranged membranous structures where viral replication takes place. Acts as a primer for viral RNA replication and remains covalently bound to viral genomic RNA. VPg is uridylylated prior to priming replication into VPg-pUpU. The oriI viral genomic sequence may act as a template for this. The VPg-pUpU is then used as primer on the genomic RNA poly(A) by the RNA-dependent RNA polymerase to replicate the viral genome. During genome replication, the VPg-RNA linkage is removed by the host TDP2, thereby accelerating replication. During the late stage of the replication cycle, host TDP2 is excluded from sites of viral RNA synthesis and encapsidation, allowing for the generation of progeny virions. Its function is as follows. Involved in the viral replication complex and viral polypeptide maturation. It exhibits protease activity with a specificity and catalytic efficiency that is different from protease 3C. Protein 3CD lacks polymerase activity. Protein 3CD binds to the 5'UTR of the viral genome. Functionally, major viral protease that mediates proteolytic processing of the polyprotein. Cleaves host EIF5B, contributing to host translation shutoff. Also cleaves host PABPC1, contributing to host translation shutoff. Cleaves host RIGI and thus contributes to the inhibition of type I interferon production. Cleaves host NLRP1, triggers host N-glycine-mediated degradation of the autoinhibitory NLRP1 N-terminal fragment. Inhibits the integrated stress response (ISR) in the infected cell by cleaving host G3BP1. Stress granule formation is thus inhibited, which allows protein synthesis and viral replication. In terms of biological role, replicates the viral genomic RNA on the surface of intracellular membranes. May form linear arrays of subunits that propagate along a strong head-to-tail interaction called interface-I. Covalently attaches UMP to a tyrosine of VPg, which is used to prime RNA synthesis. The positive stranded RNA genome is first replicated at virus induced membranous vesicles, creating a dsRNA genomic replication form. This dsRNA is then used as template to synthesize positive stranded RNA genomes. ss(+)RNA genomes are either translated, replicated or encapsidated. This Homo sapiens (Human) protein is Genome polyprotein.